The sequence spans 259 residues: Tubulin-specific chaperone C (259 aa).

The C-CAP/cofactor C-like domain occupies 112-241 (PEVYFENDTL…DEHPILDFTW (130 aa)).

The protein belongs to the TBCC family.

The protein resides in the cytoplasm. Its subcellular location is the cytoskeleton. Its function is as follows. Tubulin-folding protein; involved in the final step of the tubulin folding pathway. The polypeptide is Tubulin-specific chaperone C (cin2) (Schizosaccharomyces pombe (strain 972 / ATCC 24843) (Fission yeast)).